Reading from the N-terminus, the 329-residue chain is Sex comb on midleg-like protein 1 (329 aa).

Residues Ser-138 and Ser-238 each carry the phosphoserine modification. The tract at residues 138–157 (SPTLPVSRRENNSPSNLPRP) is disordered. Positions 258 to 325 (WSVEAVVLFL…YYIDRLKQGK (68 aa)) constitute an SAM domain.

It belongs to the SCM family. As to expression, ubiquitous. Expressed in fetal and adult tissues.

Its subcellular location is the nucleus. Putative Polycomb group (PcG) protein. PcG proteins act by forming multiprotein complexes, which are required to maintain the transcriptionally repressive state of homeotic genes throughout development. May be involved in spermatogenesis during sexual maturation. This is Sex comb on midleg-like protein 1 (SCML1) from Homo sapiens (Human).